An 864-amino-acid polypeptide reads, in one-letter code: Alanine--tRNA ligase (864 aa).

4 residues coordinate Zn(2+): H534, H538, C639, and H643.

It belongs to the class-II aminoacyl-tRNA synthetase family. Zn(2+) serves as cofactor.

The protein localises to the cytoplasm. It carries out the reaction tRNA(Ala) + L-alanine + ATP = L-alanyl-tRNA(Ala) + AMP + diphosphate. In terms of biological role, catalyzes the attachment of alanine to tRNA(Ala) in a two-step reaction: alanine is first activated by ATP to form Ala-AMP and then transferred to the acceptor end of tRNA(Ala). Also edits incorrectly charged Ser-tRNA(Ala) and Gly-tRNA(Ala) via its editing domain. In Onion yellows phytoplasma (strain OY-M), this protein is Alanine--tRNA ligase.